The primary structure comprises 90 residues: Small ribosomal subunit protein uS17 (90 aa).

Belongs to the universal ribosomal protein uS17 family. As to quaternary structure, part of the 30S ribosomal subunit.

In terms of biological role, one of the primary rRNA binding proteins, it binds specifically to the 5'-end of 16S ribosomal RNA. In Paraburkholderia phymatum (strain DSM 17167 / CIP 108236 / LMG 21445 / STM815) (Burkholderia phymatum), this protein is Small ribosomal subunit protein uS17.